Here is a 232-residue protein sequence, read N- to C-terminus: Eukaryotic translation initiation factor NCBP (232 aa).

Positions 1 to 11 (MEPAVERKVPE) are enriched in basic and acidic residues. Residues 1–49 (MEPAVERKVPEQEEQLQPSHARAEDAPPAAVEEEDEAEAEESERRNREL) are disordered. Over residues 31–41 (VEEEDEAEAEE) the composition is skewed to acidic residues.

It belongs to the eukaryotic initiation factor 4E family. EIF4F is a multi-subunit complex, the composition of which varies with external and internal environmental conditions. It is composed of at least EIF4A, EIF4E and EIF4G. EIF4E is also known to interact with other partners. In higher plants two isoforms of EIF4F have been identified, named isoform EIF4F and isoform EIF(iso)4F. Isoform EIF4F has subunits p220 and p26, whereas isoform EIF(iso)4F has subunits p82 and p28.

Its function is as follows. Recognizes and binds the 7-methylguanosine-containing mRNA cap during an early step in the initiation of protein synthesis and facilitates ribosome binding by inducing the unwinding of the mRNAs secondary structures. The sequence is that of Eukaryotic translation initiation factor NCBP (NCBP) from Triticum aestivum (Wheat).